We begin with the raw amino-acid sequence, 284 residues long: Probable endonuclease 4 (284 aa).

Zn(2+) is bound by residues His-69, His-109, Glu-145, Asp-179, His-182, His-216, Asp-229, His-231, and Glu-261.

This sequence belongs to the AP endonuclease 2 family. The cofactor is Zn(2+).

The catalysed reaction is Endonucleolytic cleavage to 5'-phosphooligonucleotide end-products.. Its function is as follows. Endonuclease IV plays a role in DNA repair. It cleaves phosphodiester bonds at apurinic or apyrimidinic (AP) sites, generating a 3'-hydroxyl group and a 5'-terminal sugar phosphate. The sequence is that of Probable endonuclease 4 from Klebsiella pneumoniae (strain 342).